The sequence spans 430 residues: Adenylosuccinate synthetase (430 aa).

Residues 12–18 (GDEGKGK) and 40–42 (GHT) contribute to the GTP site. The Proton acceptor role is filled by Asp13. 2 residues coordinate Mg(2+): Asp13 and Gly40. IMP-binding positions include 13–16 (DEGK), 38–41 (NAGH), Thr130, Arg144, Gln224, Thr239, and Arg303. His41 functions as the Proton donor in the catalytic mechanism. 299-305 (TVTGRKR) serves as a coordination point for substrate. GTP-binding positions include Arg305, 331-333 (KLD), and 413-415 (STS).

This sequence belongs to the adenylosuccinate synthetase family. Homodimer. The cofactor is Mg(2+).

It localises to the cytoplasm. It catalyses the reaction IMP + L-aspartate + GTP = N(6)-(1,2-dicarboxyethyl)-AMP + GDP + phosphate + 2 H(+). It functions in the pathway purine metabolism; AMP biosynthesis via de novo pathway; AMP from IMP: step 1/2. Plays an important role in the de novo pathway of purine nucleotide biosynthesis. Catalyzes the first committed step in the biosynthesis of AMP from IMP. This Cereibacter sphaeroides (strain ATCC 17023 / DSM 158 / JCM 6121 / CCUG 31486 / LMG 2827 / NBRC 12203 / NCIMB 8253 / ATH 2.4.1.) (Rhodobacter sphaeroides) protein is Adenylosuccinate synthetase.